A 141-amino-acid chain; its full sequence is Hemoglobin subunit alpha-1/2 (141 aa).

A Globin domain is found at 1 to 141 (VLSPADKTNV…VSTVLTSKYR (141 aa)). S3 is subject to Phosphoserine. K7 carries the N6-succinyllysine modification. A Phosphothreonine modification is found at T8. K11 is modified (N6-succinyllysine). Residue K16 is modified to N6-acetyllysine; alternate. Position 16 is an N6-succinyllysine; alternate (K16). The residue at position 24 (Y24) is a Phosphotyrosine. Phosphoserine is present on S35. N6-succinyllysine is present on K40. Residue S49 is modified to Phosphoserine. H58 provides a ligand contact to O2. A heme b-binding site is contributed by H87. S102 is subject to Phosphoserine. Residue T108 is modified to Phosphothreonine. 2 positions are modified to phosphoserine: S124 and S131. T134 and T137 each carry phosphothreonine. A Phosphoserine modification is found at S138.

The protein belongs to the globin family. In terms of assembly, heterotetramer of two alpha chains and two beta chains. As to expression, red blood cells.

Functionally, involved in oxygen transport from the lung to the various peripheral tissues. This is Hemoglobin subunit alpha-1/2 from Macaca sinica (Toque macaque).